The following is a 156-amino-acid chain: Ribosomal RNA large subunit methyltransferase H (156 aa).

S-adenosyl-L-methionine-binding positions include L73, G104, and 123–128 (LSDLTL).

Belongs to the RNA methyltransferase RlmH family. Homodimer.

It is found in the cytoplasm. The catalysed reaction is pseudouridine(1915) in 23S rRNA + S-adenosyl-L-methionine = N(3)-methylpseudouridine(1915) in 23S rRNA + S-adenosyl-L-homocysteine + H(+). In terms of biological role, specifically methylates the pseudouridine at position 1915 (m3Psi1915) in 23S rRNA. This Methylibium petroleiphilum (strain ATCC BAA-1232 / LMG 22953 / PM1) protein is Ribosomal RNA large subunit methyltransferase H.